Reading from the N-terminus, the 631-residue chain is Dolichyl-diphosphooligosaccharide--protein glycosyltransferase subunit 2 (631 aa).

The signal sequence occupies residues 1–22; that stretch reads MALPGSSTVFLLALTIIASTQA. Topologically, residues 23-540 are lumenal; it reads LTPTHYLTKH…REPEKRPPTV (518 aa). N-linked (GlcNAc...) asparagine glycosylation is present at Asn106. Lys154 participates in a covalent cross-link: Glycyl lysine isopeptide (Lys-Gly) (interchain with G-Cter in ubiquitin). A helical transmembrane segment spans residues 541–561; sequence VSNTFTALILSPLLLLFALWI. The Cytoplasmic portion of the chain corresponds to 562–571; the sequence is RIGANVSNFT. A helical transmembrane segment spans residues 572 to 592; the sequence is FAPSTIVFHLGHAAMLGLMYV. Topologically, residues 593–596 are lumenal; sequence YWTQ. Residues 597 to 617 traverse the membrane as a helical segment; that stretch reads LNMFQTLKYLAILGSVTFLAG. Residues 618–631 are Cytoplasmic-facing; sequence NRMLAQQAIKRTAH.

Belongs to the SWP1 family. As to quaternary structure, component of the oligosaccharyltransferase (OST) complex. OST exists in two different complex forms which contain common core subunits RPN1, RPN2, OST48, OST4, DAD1 and TMEM258, either STT3A or STT3B as catalytic subunits, and form-specific accessory subunits. STT3A complex assembly occurs through the formation of 3 subcomplexes. Subcomplex 1 contains RPN1 and TMEM258, subcomplex 2 contains the STT3A-specific subunits STT3A, DC2/OSTC, and KCP2 as well as the core subunit OST4, and subcomplex 3 contains RPN2, DAD1, and OST48. The STT3A complex can form stable complexes with the Sec61 complex or with both the Sec61 and TRAP complexes. Interacts with DDI2. Interacts with TMEM35A/NACHO.

The protein localises to the endoplasmic reticulum. Its subcellular location is the endoplasmic reticulum membrane. It participates in protein modification; protein glycosylation. Subunit of the oligosaccharyl transferase (OST) complex that catalyzes the initial transfer of a defined glycan (Glc(3)Man(9)GlcNAc(2) in eukaryotes) from the lipid carrier dolichol-pyrophosphate to an asparagine residue within an Asn-X-Ser/Thr consensus motif in nascent polypeptide chains, the first step in protein N-glycosylation. N-glycosylation occurs cotranslationally and the complex associates with the Sec61 complex at the channel-forming translocon complex that mediates protein translocation across the endoplasmic reticulum (ER). All subunits are required for a maximal enzyme activity. This is Dolichyl-diphosphooligosaccharide--protein glycosyltransferase subunit 2 from Bos taurus (Bovine).